A 715-amino-acid polypeptide reads, in one-letter code: L-type lectin-domain containing receptor kinase VIII.1 (715 aa).

The signal sequence occupies residues 1-21 (MSLFLSFFISILLCFFNGATT). The tract at residues 22–247 (TQFDFSTLAI…IHSIEWWSFS (226 aa)) is legume-lectin like. Residues 22 to 317 (TQFDFSTLAI…SRFCKENPGT (296 aa)) are Extracellular-facing. N-linked (GlcNAc...) asparagine glycosylation is found at Asn126 and Asn195. Residues 255-296 (GSGSGSPPPRANLMNPKANSVKSPPPLASQPSSSAIPISSNT) are disordered. Positions 283–296 (SQPSSSAIPISSNT) are enriched in low complexity. Residues 318 to 338 (IAGVVTAGAFFLALFAGALFW) form a helical membrane-spanning segment. The Cytoplasmic segment spans residues 339-715 (VYSKKFKRVE…IIRSDDDHLV (377 aa)). Positions 376-676 (FNESRIIGHG…MSFSTSHLLL (301 aa)) constitute a Protein kinase domain. Residues 382-390 (IGHGAFGVV) and Lys405 contribute to the ATP site. The active-site Proton acceptor is the Asp500.

It in the C-terminal section; belongs to the protein kinase superfamily. Ser/Thr protein kinase family. In the N-terminal section; belongs to the leguminous lectin family.

The protein localises to the cell membrane. The enzyme catalyses L-seryl-[protein] + ATP = O-phospho-L-seryl-[protein] + ADP + H(+). It catalyses the reaction L-threonyl-[protein] + ATP = O-phospho-L-threonyl-[protein] + ADP + H(+). The polypeptide is L-type lectin-domain containing receptor kinase VIII.1 (LECRK81) (Arabidopsis thaliana (Mouse-ear cress)).